Reading from the N-terminus, the 157-residue chain is Arginine regulator (157 aa).

The protein belongs to the ArgR family.

The protein localises to the cytoplasm. Its pathway is amino-acid degradation; L-arginine degradation via ADI pathway. In terms of biological role, regulates the transcription of the arc operon, involved in arginine catabolism. In Streptococcus pyogenes serotype M3 (strain SSI-1), this protein is Arginine regulator (argR1).